The primary structure comprises 451 residues: MVVVAILAAGRGTRMKSDLPKVLHPLGGRSLVERVIDSVEPLSPSRRLVIVGYQAEQVKTGLQSLHLEFVEQTVQLGTGHAIQQLLPHLEGYTGDLLVLNGDVPLLRTQTLEQLLQTHQTNQNAATILTSHLPNPKGYGRVFCNGNNIVQQIVEDKDCSPAQRQNHRINAGIYCFRWENLAQVLPHLEANNAQKEYYLTDAVTQVGQVMAVDVEDYQEILGINDRLQLATAYEILQRRVKEQWMMAGVTLIDPNSITIDDTVDLQPDVIIEPQTHLRGNTFIQTGSRIGPGSLIENSQLGANVTVQYSVITDSTIQNGAKIGPYAHLRGHAQVGANCRIGNFVELKNTELGDRTNVAHLSYLGDATAGTQVNIGAGTITANYDGVKKHRTKIGDRTKTGSNSVLVAPVTLGDDVYVAAGSTITEDVPNDSLVIARTRQVVKPGWRKKSGES.

Residues 1–225 (MVVVAILAAG…YQEILGINDR (225 aa)) form a pyrophosphorylase region. Residues 7-10 (LAAG), Lys-21, Gln-72, and 77-78 (GT) contribute to the UDP-N-acetyl-alpha-D-glucosamine site. Asp-102 lines the Mg(2+) pocket. UDP-N-acetyl-alpha-D-glucosamine is bound by residues Gly-139, Glu-154, Asn-169, and Asn-223. Position 223 (Asn-223) interacts with Mg(2+). The tract at residues 226–246 (LQLATAYEILQRRVKEQWMMA) is linker. The interval 247–451 (GVTLIDPNSI…PGWRKKSGES (205 aa)) is N-acetyltransferase. UDP-N-acetyl-alpha-D-glucosamine contacts are provided by Arg-328 and Lys-346. His-358 (proton acceptor) is an active-site residue. The UDP-N-acetyl-alpha-D-glucosamine site is built by Tyr-361 and Asn-372. Acetyl-CoA contacts are provided by residues Ala-375, 381–382 (NY), Ser-400, Ala-418, and Arg-435.

The protein in the N-terminal section; belongs to the N-acetylglucosamine-1-phosphate uridyltransferase family. In the C-terminal section; belongs to the transferase hexapeptide repeat family. In terms of assembly, homotrimer. Mg(2+) is required as a cofactor.

It is found in the cytoplasm. The catalysed reaction is alpha-D-glucosamine 1-phosphate + acetyl-CoA = N-acetyl-alpha-D-glucosamine 1-phosphate + CoA + H(+). The enzyme catalyses N-acetyl-alpha-D-glucosamine 1-phosphate + UTP + H(+) = UDP-N-acetyl-alpha-D-glucosamine + diphosphate. It functions in the pathway nucleotide-sugar biosynthesis; UDP-N-acetyl-alpha-D-glucosamine biosynthesis; N-acetyl-alpha-D-glucosamine 1-phosphate from alpha-D-glucosamine 6-phosphate (route II): step 2/2. It participates in nucleotide-sugar biosynthesis; UDP-N-acetyl-alpha-D-glucosamine biosynthesis; UDP-N-acetyl-alpha-D-glucosamine from N-acetyl-alpha-D-glucosamine 1-phosphate: step 1/1. The protein operates within bacterial outer membrane biogenesis; LPS lipid A biosynthesis. In terms of biological role, catalyzes the last two sequential reactions in the de novo biosynthetic pathway for UDP-N-acetylglucosamine (UDP-GlcNAc). The C-terminal domain catalyzes the transfer of acetyl group from acetyl coenzyme A to glucosamine-1-phosphate (GlcN-1-P) to produce N-acetylglucosamine-1-phosphate (GlcNAc-1-P), which is converted into UDP-GlcNAc by the transfer of uridine 5-monophosphate (from uridine 5-triphosphate), a reaction catalyzed by the N-terminal domain. The polypeptide is Bifunctional protein GlmU (Trichormus variabilis (strain ATCC 29413 / PCC 7937) (Anabaena variabilis)).